The sequence spans 153 residues: Conglutin delta 2 (153 aa).

The N-terminal stretch at 1-22 (MAKLTILIALVAALVLVVHTSA) is a signal peptide. 4 disulfide bridges follow: Cys30/Cys102, Cys42/Cys90, Cys91/Cys138, and Cys104/Cys146.

It belongs to the 2S seed storage albumins family. Heterodimer of a small chain and a large chain; disulfide-linked. In terms of tissue distribution, expressed in developing cotyledons (at protein level).

Its subcellular location is the endoplasmic reticulum. The sequence is that of Conglutin delta 2 from Lupinus angustifolius (Narrow-leaved blue lupine).